The sequence spans 420 residues: Ribosome biogenesis protein WDR12 homolog (420 aa).

Positions 10 to 92 (VQVHLKTKQE…EDAIEIEYVE (83 aa)) are ubiquitin-like (UBL) domain. WD repeat units lie at residues 104 to 142 (LHDD…LTIS), 143 to 185 (GHTA…NSVE), 192 to 231 (GHER…AVEG), 250 to 288 (GHRE…IKTE), 290 to 329 (STNK…GSVV), 335 to 375 (GHNA…APLY), and 379 to 417 (GHGE…ADDA).

The protein belongs to the WD repeat WDR12/YTM1 family.

It is found in the nucleus. It localises to the nucleolus. Its subcellular location is the nucleoplasm. Its function is as follows. Required for maturation of ribosomal RNAs and formation of the large ribosomal subunit. The chain is Ribosome biogenesis protein WDR12 homolog from Drosophila yakuba (Fruit fly).